Reading from the N-terminus, the 257-residue chain is NAD kinase (257 aa).

Aspartate 46 acts as the Proton acceptor in catalysis. NAD(+)-binding positions include 46 to 47, 116 to 117, aspartate 146, alanine 154, and 157 to 162; these read DG, NE, and TAYNLS.

It belongs to the NAD kinase family. A divalent metal cation is required as a cofactor.

It is found in the cytoplasm. The enzyme catalyses NAD(+) + ATP = ADP + NADP(+) + H(+). Functionally, involved in the regulation of the intracellular balance of NAD and NADP, and is a key enzyme in the biosynthesis of NADP. Catalyzes specifically the phosphorylation on 2'-hydroxyl of the adenosine moiety of NAD to yield NADP. This Mesorhizobium japonicum (strain LMG 29417 / CECT 9101 / MAFF 303099) (Mesorhizobium loti (strain MAFF 303099)) protein is NAD kinase.